A 382-amino-acid chain; its full sequence is Bifunctional enzyme IspD/IspF (382 aa).

The segment at Met1–Arg225 is 2-C-methyl-D-erythritol 4-phosphate cytidylyltransferase. The tract at residues Arg225–Ile382 is 2-C-methyl-D-erythritol 2,4-cyclodiphosphate synthase. Residues Asp231 and His233 each contribute to the a divalent metal cation site. 4-CDP-2-C-methyl-D-erythritol 2-phosphate-binding positions include Asp231 to His233 and His257 to Ser258. An a divalent metal cation-binding site is contributed by His265. Residues Asp279–Gly281, Thr355–Glu358, Phe362, and Arg365 each bind 4-CDP-2-C-methyl-D-erythritol 2-phosphate.

It in the N-terminal section; belongs to the IspD/TarI cytidylyltransferase family. IspD subfamily. In the C-terminal section; belongs to the IspF family. A divalent metal cation serves as cofactor.

The enzyme catalyses 2-C-methyl-D-erythritol 4-phosphate + CTP + H(+) = 4-CDP-2-C-methyl-D-erythritol + diphosphate. It catalyses the reaction 4-CDP-2-C-methyl-D-erythritol 2-phosphate = 2-C-methyl-D-erythritol 2,4-cyclic diphosphate + CMP. It participates in isoprenoid biosynthesis; isopentenyl diphosphate biosynthesis via DXP pathway; isopentenyl diphosphate from 1-deoxy-D-xylulose 5-phosphate: step 2/6. The protein operates within isoprenoid biosynthesis; isopentenyl diphosphate biosynthesis via DXP pathway; isopentenyl diphosphate from 1-deoxy-D-xylulose 5-phosphate: step 4/6. In terms of biological role, bifunctional enzyme that catalyzes the formation of 4-diphosphocytidyl-2-C-methyl-D-erythritol from CTP and 2-C-methyl-D-erythritol 4-phosphate (MEP) (IspD), and catalyzes the conversion of 4-diphosphocytidyl-2-C-methyl-D-erythritol 2-phosphate (CDP-ME2P) to 2-C-methyl-D-erythritol 2,4-cyclodiphosphate (ME-CPP) with a corresponding release of cytidine 5-monophosphate (CMP) (IspF). The polypeptide is Bifunctional enzyme IspD/IspF (Rhizorhabdus wittichii (strain DSM 6014 / CCUG 31198 / JCM 15750 / NBRC 105917 / EY 4224 / RW1) (Sphingomonas wittichii)).